The sequence spans 208 residues: MLQISKLISQGAGLAPVLVKRASTLEIDWDVRQKSRFDALDSLGRQLGVFLPRGTLVRGGDVLIAEDGSMVRVIAAPQPVLRITACASHGSAFDLTRAAYHLGNRHVPIELKPDHLKIEPDHVLADMLRAMHLTVQEVSEAFEPEGGAYSAGGHGHTHAPAATPVPAAVPPAAHVHGPDCNHGHDHAHAPQAIKPVAIQIHPRKPHSH.

Positions 145–165 (EGGAYSAGGHGHTHAPAATPV) are disordered.

Belongs to the UreE family.

The protein resides in the cytoplasm. Its function is as follows. Involved in urease metallocenter assembly. Binds nickel. Probably functions as a nickel donor during metallocenter assembly. This Polaromonas naphthalenivorans (strain CJ2) protein is Urease accessory protein UreE.